Here is a 48-residue protein sequence, read N- to C-terminus: Light-harvesting polypeptide B-885 beta-1 chain (48 aa).

The Cytoplasmic portion of the chain corresponds to 1 to 20; sequence AEDRKSLSGLTEQEAQEFGT. A helical membrane pass occupies residues 21-43; the sequence is LYTQGVAFVAVIAVVAHALVWAW. A bacteriochlorophyll is bound at residue His-37. The Periplasmic segment spans residues 44–48; the sequence is RPWLQ.

The protein belongs to the antenna complex beta subunit family. In terms of assembly, the core complex is formed by different alpha and beta chains, binding bacteriochlorophyll molecules, and arranged most probably in tetrameric structures disposed around the reaction center. The non-pigmented gamma chains may constitute additional components.

It is found in the cell inner membrane. Antenna complexes are light-harvesting systems, which transfer the excitation energy to the reaction centers. The protein is Light-harvesting polypeptide B-885 beta-1 chain of Rhodocyclus tenuis (Rhodospirillum tenue).